The chain runs to 153 residues: uncharacterized protein (153 aa).

Residues 1–22 (MKAFNKLFSLVVASVLVFSLAG) form the signal peptide. The N-palmitoyl cysteine moiety is linked to residue Cys-23. The S-diacylglycerol cysteine moiety is linked to residue Cys-23.

The protein to L.monocytogenes lmo0207.

The protein localises to the cell membrane. This is an uncharacterized protein from Escherichia coli (strain K12).